Here is a 215-residue protein sequence, read N- to C-terminus: Probable phosphoglycerate mutase GpmB (215 aa).

Substrate-binding positions include 8–15 (RHGETQWN), 21–22 (QG), R58, R60, 82–85 (ELNM), 104–105 (RR), and 151–152 (GI). H9 serves as the catalytic Tele-phosphohistidine intermediate. E82 functions as the Proton donor/acceptor in the catalytic mechanism.

Belongs to the phosphoglycerate mutase family. GpmB subfamily.

The catalysed reaction is (2R)-2-phosphoglycerate = (2R)-3-phosphoglycerate. The protein operates within carbohydrate degradation; glycolysis; pyruvate from D-glyceraldehyde 3-phosphate: step 3/5. In Shigella boydii serotype 18 (strain CDC 3083-94 / BS512), this protein is Probable phosphoglycerate mutase GpmB.